Here is a 490-residue protein sequence, read N- to C-terminus: (21S)-21-acetyl-1-hydroxy-apo-melianone synthase CYP88A164 (490 aa).

Residues 4–24 form a helical membrane-spanning segment; that stretch reads DLLWLILAIVVGTYVVLFGFL. Residue Cys438 participates in heme binding.

It belongs to the cytochrome P450 family. Heme serves as cofactor. In terms of tissue distribution, mainly expressed in petioles and, to a lower extent, in roots.

Its subcellular location is the membrane. The enzyme catalyses (21S)-21-acetoxyl-apo-melianone + reduced [NADPH--hemoprotein reductase] + O2 = (21S)-21-acetyl-1-hydroxy-apo-melianone + oxidized [NADPH--hemoprotein reductase] + H2O + H(+). Its pathway is secondary metabolite biosynthesis; terpenoid biosynthesis. Its function is as follows. Monooxygenase involved in the biosynthesis of limonoids triterpene natural products such as azadirachtin, an antifeedant widely used as bioinsecticide, and possessing many medicinal applications including anti-tumoral, anti-malarial, anti-rheumatic, antibacterial, anti-inflammatory, anti-pyretic and diuretic effects. Catalyzes the conversion of (21S)-21-acetoxyl-apo-melianone to (21S)-21-acetyl-1-hydroxy-apo-melianone. The chain is (21S)-21-acetyl-1-hydroxy-apo-melianone synthase CYP88A164 from Melia azedarach (Chinaberry tree).